We begin with the raw amino-acid sequence, 273 residues long: GTP cyclohydrolase MptA (273 aa).

The protein belongs to the GTP cyclohydrolase IV family. In terms of assembly, homodimer. Requires Fe(2+) as cofactor.

It carries out the reaction GTP + H2O = 7,8-dihydroneopterin 2',3'-cyclic phosphate + formate + diphosphate + H(+). It functions in the pathway cofactor biosynthesis; 5,6,7,8-tetrahydromethanopterin biosynthesis. In terms of biological role, converts GTP to 7,8-dihydro-D-neopterin 2',3'-cyclic phosphate, the first intermediate in the biosynthesis of coenzyme methanopterin. The sequence is that of GTP cyclohydrolase MptA from Picrophilus torridus (strain ATCC 700027 / DSM 9790 / JCM 10055 / NBRC 100828 / KAW 2/3).